The chain runs to 2334 residues: Centriolin (2334 aa).

Residues 1-70 (MKKGSERRLS…ESTVPLEPQQ (70 aa)) are disordered. Positions 21–38 (PGPSSLRSSMRSRSLSPL) are enriched in low complexity. LRR repeat units follow at residues 126–147 (KLEV…DKLL), 148–169 (RLRE…ENMC), 170–191 (NLQK…FAKK), and 194–215 (SLRV…SKLK). An LRRCT domain is found at 228–266 (NPVVALPHYLQFIIFHLRSLESLEGQPVTTQDRQEAFER). 2 coiled-coil regions span residues 265–343 (ERFS…VELT) and 437–800 (DLQL…LNHV). Disordered stretches follow at residues 542 to 562 (DSLD…RGKE) and 751 to 771 (SLRD…ENNE). The residue at position 832 (S832) is a Phosphoserine. Residues 858–1102 (EKEEAQVRER…ITRLRDVLNL (245 aa)) are a coiled coil. 3 disordered regions span residues 1154 to 1198 (SKVS…PLPA), 1213 to 1245 (KSFS…VPPP), and 1338 to 1360 (LKSK…EEVD). Residues 1227 to 1238 (SQEESGLDDQEE) are compositionally biased toward acidic residues. The stretch at 1320-2169 (EHHNLENEVS…MRTLKSEVKD (850 aa)) forms a coiled coil. At S1478 the chain carries Phosphoserine. Positions 1951–2121 (MMFQKLQKER…ELVAQDNHER (171 aa)) are required for centrosome localization. The interval 1988–2334 (QKSRLKQLLT…PLEEPNSYRH (347 aa)) is sufficient for interaction with HOOK2. Residues 2291–2307 (TSTSTDSASSPSLPSLV) are compositionally biased toward low complexity. The interval 2291-2334 (TSTSTDSASSPSLPSLVEDSQHGHSQSSFQVLQVPLEEPNSYRH) is disordered.

Interacts with HOOK2. Interacts with EXOC6 and SNAPIN. Associates with the exocyst complex. As to expression, highly expressed in liver.

It localises to the cytoplasm. It is found in the cytoskeleton. The protein resides in the microtubule organizing center. The protein localises to the centrosome. Its subcellular location is the midbody. It localises to the midbody ring. In terms of biological role, involved in cell cycle progression and cytokinesis. During the late steps of cytokinesis, anchors exocyst and SNARE complexes at the midbody, thereby allowing secretory vesicle-mediated abscission. The protein is Centriolin (Cntrl) of Mus musculus (Mouse).